Consider the following 428-residue polypeptide: Maltoporin (428 aa).

A signal peptide spans M1–A21.

This sequence belongs to the porin LamB (TC 1.B.3) family. In terms of assembly, homotrimer formed of three 18-stranded antiparallel beta-barrels, containing three independent channels.

It localises to the cell outer membrane. The catalysed reaction is beta-maltose(in) = beta-maltose(out). Its function is as follows. Involved in the transport of maltose and maltodextrins. The polypeptide is Maltoporin (Mannheimia succiniciproducens (strain KCTC 0769BP / MBEL55E)).